Here is a 698-residue protein sequence, read N- to C-terminus: Colicin V secretion/processing ATP-binding protein CvaB (698 aa).

The Peptidase C39 domain maps to Q26–V145. Residue C32 is part of the active site. 7 helical membrane-spanning segments follow: residues G33–L53, V92–V112, L176–G196, G211–S231, T289–Y311, L315–Y334, and I412–F432. The ABC transmembrane type-1 domain occupies L176–I458. One can recognise an ABC transporter domain in the interval L492–I698. G526–T533 contacts ATP.

This sequence belongs to the ABC transporter superfamily. Colicin V exporter (TC 3.A.1.110.2) family.

The protein resides in the cell membrane. Involved, in conjunction with CvaA, in the secretion of colicin V. The protein is Colicin V secretion/processing ATP-binding protein CvaB (cvaB) of Escherichia coli.